Here is a 781-residue protein sequence, read N- to C-terminus: Zinc finger protein klf1 (781 aa).

2 consecutive C2H2-type zinc fingers follow at residues 17–41 and 47–70; these read YKCDFQGCTKSFTRKEHARRHFRSH and FICPHCSSSFTRSDVLNRHVNQKH.

The protein localises to the nucleus. It localises to the cytoplasm. Its subcellular location is the cytoskeleton. The protein resides in the spindle. Required for maintaining cell viability in nitrogen-deficient stationary phase (G0) cells. In Schizosaccharomyces pombe (strain 972 / ATCC 24843) (Fission yeast), this protein is Zinc finger protein klf1 (klf1).